A 763-amino-acid polypeptide reads, in one-letter code: Phosphoglycerol transferase I (763 aa).

4 consecutive transmembrane segments (helical) span residues 1–21 (MSELLSVALFLASVLIYAWKA), 26–46 (WWFAATLTVLGLFVILNITLY), 77–97 (ILPGIGIALALVAVFGALGWI), and 108–128 (VGYSLLALLLALGSVDASPAF).

This sequence belongs to the OpgB family.

The protein localises to the cell inner membrane. The enzyme catalyses a phosphatidylglycerol + a membrane-derived-oligosaccharide D-glucose = a 1,2-diacyl-sn-glycerol + a membrane-derived-oligosaccharide 6-(glycerophospho)-D-glucose.. It participates in glycan metabolism; osmoregulated periplasmic glucan (OPG) biosynthesis. Transfers a phosphoglycerol residue from phosphatidylglycerol to the membrane-bound nascent glucan backbones. This chain is Phosphoglycerol transferase I, found in Salmonella newport (strain SL254).